The chain runs to 367 residues: Phosphoribosylaminoimidazole-succinocarboxamide synthase (367 aa).

Belongs to the SAICAR synthetase family.

It catalyses the reaction 5-amino-1-(5-phospho-D-ribosyl)imidazole-4-carboxylate + L-aspartate + ATP = (2S)-2-[5-amino-1-(5-phospho-beta-D-ribosyl)imidazole-4-carboxamido]succinate + ADP + phosphate + 2 H(+). Its pathway is purine metabolism; IMP biosynthesis via de novo pathway; 5-amino-1-(5-phospho-D-ribosyl)imidazole-4-carboxamide from 5-amino-1-(5-phospho-D-ribosyl)imidazole-4-carboxylate: step 1/2. The protein is Phosphoribosylaminoimidazole-succinocarboxamide synthase of Shewanella sp. (strain W3-18-1).